Consider the following 68-residue polypeptide: Metallothionein-3 (68 aa).

Methionine 1 carries the post-translational modification N-acetylmethionine. The interval 1-30 (MDPETCPCPSGGSCTCADSCKCEGCKCTSC) is beta. The a divalent metal cation site is built by cysteine 6, cysteine 8, cysteine 14, cysteine 16, cysteine 20, cysteine 22, cysteine 25, cysteine 27, and cysteine 30. The interval 31-68 (KKSCCSCCPAECEKCAKDCVCKGGEGAEAEAEKCSCCE) is alpha. Residue serine 33 is modified to Phosphoserine. Residues cysteine 34, cysteine 35, cysteine 37, cysteine 38, cysteine 42, cysteine 45, cysteine 49, cysteine 51, cysteine 64, cysteine 66, and cysteine 67 each contribute to the a divalent metal cation site.

This sequence belongs to the metallothionein superfamily. Type 1 family.

Binds heavy metals. Contains five zinc and one copper atoms per polypeptide chain and only a negligible amount of cadmium. This is Metallothionein-3 (MT3) from Macaca fascicularis (Crab-eating macaque).